The following is a 325-amino-acid chain: N-acetyl-gamma-glutamyl-phosphate reductase (325 aa).

The active site involves cysteine 131.

It belongs to the NAGSA dehydrogenase family. Type 1 subfamily.

It localises to the cytoplasm. It catalyses the reaction N-acetyl-L-glutamate 5-semialdehyde + phosphate + NADP(+) = N-acetyl-L-glutamyl 5-phosphate + NADPH + H(+). It participates in amino-acid biosynthesis; L-arginine biosynthesis; N(2)-acetyl-L-ornithine from L-glutamate: step 3/4. In terms of biological role, catalyzes the NADPH-dependent reduction of N-acetyl-5-glutamyl phosphate to yield N-acetyl-L-glutamate 5-semialdehyde. This chain is N-acetyl-gamma-glutamyl-phosphate reductase, found in Methylobacterium sp. (strain 4-46).